Here is a 521-residue protein sequence, read N- to C-terminus: Bifunctional purine biosynthesis protein PurH (521 aa).

One can recognise an MGS-like domain in the interval 1 to 145; that stretch reads MIKQALISVS…KNHRDVTVVV (145 aa).

It belongs to the PurH family.

The enzyme catalyses (6R)-10-formyltetrahydrofolate + 5-amino-1-(5-phospho-beta-D-ribosyl)imidazole-4-carboxamide = 5-formamido-1-(5-phospho-D-ribosyl)imidazole-4-carboxamide + (6S)-5,6,7,8-tetrahydrofolate. It carries out the reaction IMP + H2O = 5-formamido-1-(5-phospho-D-ribosyl)imidazole-4-carboxamide. Its pathway is purine metabolism; IMP biosynthesis via de novo pathway; 5-formamido-1-(5-phospho-D-ribosyl)imidazole-4-carboxamide from 5-amino-1-(5-phospho-D-ribosyl)imidazole-4-carboxamide (10-formyl THF route): step 1/1. The protein operates within purine metabolism; IMP biosynthesis via de novo pathway; IMP from 5-formamido-1-(5-phospho-D-ribosyl)imidazole-4-carboxamide: step 1/1. In Paraburkholderia xenovorans (strain LB400), this protein is Bifunctional purine biosynthesis protein PurH.